A 270-amino-acid chain; its full sequence is Glutamate racemase (270 aa).

Residues Asp13 to Ser14 and Tyr45 to Gly46 each bind substrate. The active-site Proton donor/acceptor is Cys77. Asn78–Thr79 is a binding site for substrate. Cys185 functions as the Proton donor/acceptor in the catalytic mechanism. Substrate is bound at residue Thr186–His187.

The protein belongs to the aspartate/glutamate racemases family.

The enzyme catalyses L-glutamate = D-glutamate. It functions in the pathway cell wall biogenesis; peptidoglycan biosynthesis. Provides the (R)-glutamate required for cell wall biosynthesis. This is Glutamate racemase from Vibrio parahaemolyticus serotype O3:K6 (strain RIMD 2210633).